We begin with the raw amino-acid sequence, 261 residues long: Vacuolar protein sorting-associated protein 37D (261 aa).

Residues 93-182 form the VPS37 C-terminal domain; it reads AENCADKLQR…RRRERSAQPA (90 aa). Positions 172–261 are disordered; the sequence is LRRRERSAQP…RPSQPEPPHR (90 aa). The span at 181-195 shows a compositional bias: low complexity; it reads PAPTTAAAAAAAATA. 2 stretches are compositionally biased toward pro residues: residues 215–224 and 231–261; these read GPPPAVPRSL and PVPPVKGSPGCPFGPAPLLSPRPSQPEPPHR.

This sequence belongs to the VPS37 family. In terms of assembly, component of the ESCRT-I complex (endosomal sorting complex required for transport I) which consists of TSG101, VPS28, a VPS37 protein (VPS37A to -D) and MVB12A or MVB12B in a 1:1:1:1 stoichiometry. Interacts with TSG101 and MVB12A. Component of the ESCRT-I complex (endosomal sorting complex required for transport I) which consists of TSG101, VPS28, a VPS37 protein (VPS37A to -D) and UBAP1 in a 1:1:1:1 stoichiometry.

It localises to the late endosome membrane. Component of the ESCRT-I complex, a regulator of vesicular trafficking process. Required for the sorting of endocytic ubiquitinated cargos into multivesicular bodies. May be involved in cell growth and differentiation. In Mus musculus (Mouse), this protein is Vacuolar protein sorting-associated protein 37D.